The following is a 319-amino-acid chain: Olfactory receptor 56B4 (319 aa).

Residues 1 to 31 (MDTSTSVTYDSSLQISQFILMGLPGIHEWQH) lie on the Extracellular side of the membrane. Residues 32–52 (WLSLPLTLLYLLALGANLLII) form a helical membrane-spanning segment. Topologically, residues 53–60 (ITIQHETV) are cytoplasmic. Residues 61 to 81 (LHEPMYHLLGILAVVDIGLAT) form a helical membrane-spanning segment. Over 82–105 (TIMPKILAIFWFDAKAISLPMCFA) the chain is Extracellular. Cysteine 103 and cysteine 195 form a disulfide bridge. A helical membrane pass occupies residues 106–126 (QIYAIHCFFCIESGIFLCMAV). At 127-145 (DRYIAICRPLQYPSIVTKA) the chain is on the cytoplasmic side. A helical transmembrane segment spans residues 146 to 166 (FVFKATGFIMLRNGLLTIPVP). The Extracellular segment spans residues 167 to 202 (ILAAQRHYCSRNEIEHCLCSNLGVISLACDDITVNK). The helical transmembrane segment at 203–223 (FYQLMLAWVLVGSDMALVFSS) threads the bilayer. The Cytoplasmic portion of the chain corresponds to 224-243 (YAVILHSVLRLNSAEAMSKA). Residues 244 to 263 (LSTCSSHLILILFHTGIIVL) traverse the membrane as a helical segment. Residues 264–277 (SVTHLAEKKIPLIP) lie on the Extracellular side of the membrane. A helical membrane pass occupies residues 278-298 (VFLNVLHNVIPPALNPLACAL). Residues 299–319 (RMHKLRLGFQRLLGLGQDVSK) are Cytoplasmic-facing.

The protein belongs to the G-protein coupled receptor 1 family.

It localises to the cell membrane. In terms of biological role, odorant receptor. The polypeptide is Olfactory receptor 56B4 (OR56B4) (Homo sapiens (Human)).